Reading from the N-terminus, the 454-residue chain is Cytochrome b-c1 complex subunit 2, mitochondrial (454 aa).

The N-terminal 35 residues, 1-35 (MISRSALSRGSQLALRRPAAAKTAQRGFAAAAASP), are a transit peptide targeting the mitochondrion.

Belongs to the peptidase M16 family. UQCRC2/QCR2 subfamily. In terms of assembly, component of the ubiquinol-cytochrome c oxidoreductase (cytochrome b-c1 complex, complex III, CIII), a multisubunit enzyme composed of 10 subunits. The complex is composed of 3 respiratory subunits cytochrome b (cob), cytochrome c1 (cyt-1) and Rieske protein (fes-1), 2 core protein subunits pep and ucr-1, and 5 low-molecular weight protein subunits qcr6, qcr7, qcr8, qcr9 and probably NCU16844/qcr10. The complex exists as an obligatory dimer and forms supercomplexes (SCs) in the inner mitochondrial membrane with NADH-ubiquinone oxidoreductase (complex I, CI) and cytochrome c oxidase (complex IV, CIV), resulting in different assemblies (supercomplexes SCI(1)III(2), SCIII(2)IV(1) and SCIII(2)IV(2) as well as higher order I(x)III(y)IV(z) megacomplexes).

Its subcellular location is the mitochondrion inner membrane. Component of the ubiquinol-cytochrome c oxidoreductase, a multisubunit transmembrane complex that is part of the mitochondrial electron transport chain which drives oxidative phosphorylation. The respiratory chain contains 3 multisubunit complexes succinate dehydrogenase (complex II, CII), ubiquinol-cytochrome c oxidoreductase (cytochrome b-c1 complex, complex III, CIII) and cytochrome c oxidase (complex IV, CIV), that cooperate to transfer electrons derived from NADH and succinate to molecular oxygen, creating an electrochemical gradient over the inner membrane that drives transmembrane transport and the ATP synthase. The cytochrome b-c1 complex catalyzes electron transfer from ubiquinol to cytochrome c, linking this redox reaction to translocation of protons across the mitochondrial inner membrane, with protons being carried across the membrane as hydrogens on the quinol. In the process called Q cycle, 2 protons are consumed from the matrix, 4 protons are released into the intermembrane space and 2 electrons are passed to cytochrome c. In Neurospora crassa (strain ATCC 24698 / 74-OR23-1A / CBS 708.71 / DSM 1257 / FGSC 987), this protein is Cytochrome b-c1 complex subunit 2, mitochondrial (ucr-1).